The primary structure comprises 242 residues: MDEIKPKKEENSKRRRNVKPICRETGDHVHYLPTCKTKPKPTRTHHAPPPILDSIFKVTHKPHYYECRKNHAADIGTTAYDGCGEFVSSTGEEDSLNCAACGCHRNFHREELIPENGGVTETVLEVLKISSCQFRRIFCSPYGGGKSEGKKKKKEKESYGGDPIIKDRFGGAEEEEGIVKRLKTKFTAEQTEKMRDYAEKLRWKVRPERQEEVEEFCVEIGVNRKNFRIWMNNHKDKIIIDE.

A ZF-HD dimerization-type; degenerate zinc finger spans residues 64–111 (YYECRKNHAADIGTTAYDGCGEFVSSTGEEDSLNCAACGCHRNFHREE). Residues 144–166 (GGKSEGKKKKKEKESYGGDPIIK) are disordered. Over residues 155–166 (EKESYGGDPIIK) the composition is skewed to basic and acidic residues. Positions 179-238 (VKRLKTKFTAEQTEKMRDYAEKLRWKVRPERQEEVEEFCVEIGVNRKNFRIWMNNHKDKI) form a DNA-binding region, homeobox.

As to quaternary structure, homo- and heterodimer with other ZFHD proteins. Interacts with MIF1, MIF2 and MIF3; these interactions prevent nuclear localization and DNA-binding to inhibit transcription regulation activity. Binds to ZHD11. Mostly expressed in flowers.

It localises to the nucleus. In terms of biological role, putative transcription factor. This chain is Zinc-finger homeodomain protein 13 (ZHD13), found in Arabidopsis thaliana (Mouse-ear cress).